We begin with the raw amino-acid sequence, 87 residues long: Small ribosomal subunit protein bS20 (87 aa).

The tract at residues 1–26 (MANIKSAKKRAIQSEKRRKHNASRRS) is disordered.

Belongs to the bacterial ribosomal protein bS20 family.

Functionally, binds directly to 16S ribosomal RNA. The protein is Small ribosomal subunit protein bS20 of Photorhabdus laumondii subsp. laumondii (strain DSM 15139 / CIP 105565 / TT01) (Photorhabdus luminescens subsp. laumondii).